The following is a 238-amino-acid chain: Lipoprotein-releasing system ATP-binding protein LolD (238 aa).

Residues Leu6–Ala238 enclose the ABC transporter domain. An ATP-binding site is contributed by Gly42–Ser49.

The protein belongs to the ABC transporter superfamily. Lipoprotein translocase (TC 3.A.1.125) family. The complex is composed of two ATP-binding proteins (LolD) and two transmembrane proteins (LolC and LolE).

It localises to the cell inner membrane. In terms of biological role, part of the ABC transporter complex LolCDE involved in the translocation of mature outer membrane-directed lipoproteins, from the inner membrane to the periplasmic chaperone, LolA. Responsible for the formation of the LolA-lipoprotein complex in an ATP-dependent manner. This chain is Lipoprotein-releasing system ATP-binding protein LolD, found in Aliivibrio fischeri (strain ATCC 700601 / ES114) (Vibrio fischeri).